Reading from the N-terminus, the 726-residue chain is Catalase-peroxidase (726 aa).

Positions 93-216 form a cross-link, tryptophyl-tyrosyl-methioninium (Trp-Tyr) (with M-242); it reads WHSAGTYRVH…LAAVQMGLIY (124 aa). The active-site Proton acceptor is the H94. The segment at residues 216–242 is a cross-link (tryptophyl-tyrosyl-methioninium (Tyr-Met) (with W-93)); sequence YVNPEGPNGNPDPVAAAVDIRETFTRM. H257 contributes to the heme b binding site. Residues 471–490 form a disordered region; sequence GSDKRGGANGARIRLSPQKD.

It belongs to the peroxidase family. Peroxidase/catalase subfamily. In terms of assembly, homodimer or homotetramer. The cofactor is heme b. Post-translationally, formation of the three residue Trp-Tyr-Met cross-link is important for the catalase, but not the peroxidase activity of the enzyme.

The catalysed reaction is H2O2 + AH2 = A + 2 H2O. It catalyses the reaction 2 H2O2 = O2 + 2 H2O. Functionally, bifunctional enzyme with both catalase and broad-spectrum peroxidase activity. The protein is Catalase-peroxidase of Methylacidiphilum infernorum (isolate V4) (Methylokorus infernorum (strain V4)).